Reading from the N-terminus, the 250-residue chain is 5'-nucleotidase SurE (250 aa).

Asp8, Asp9, Ser39, and Asn95 together coordinate a divalent metal cation.

Belongs to the SurE nucleotidase family. Requires a divalent metal cation as cofactor.

The protein localises to the cytoplasm. It catalyses the reaction a ribonucleoside 5'-phosphate + H2O = a ribonucleoside + phosphate. Its function is as follows. Nucleotidase that shows phosphatase activity on nucleoside 5'-monophosphates. In Cupriavidus pinatubonensis (strain JMP 134 / LMG 1197) (Cupriavidus necator (strain JMP 134)), this protein is 5'-nucleotidase SurE.